Here is a 334-residue protein sequence, read N- to C-terminus: Holliday junction branch migration complex subunit RuvB (334 aa).

The interval 1-180 is large ATPase domain (RuvB-L); that stretch reads MSEFLTPERT…FGIILELDFY (180 aa). ATP-binding positions include Leu-19, Arg-20, Gly-61, Lys-64, Thr-65, Thr-66, 127 to 129, Arg-170, Tyr-180, and Arg-217; that span reads EDF. Mg(2+) is bound at residue Thr-65. The segment at 181–251 is small ATPAse domain (RuvB-S); it reads TVKELKEIIK…IVLKTMEVLN (71 aa). A head domain (RuvB-H) region spans residues 254–334; it reads AEGLDEFDRK…KYEVPENRLF (81 aa). Residues Arg-309 and Arg-314 each contribute to the DNA site.

Belongs to the RuvB family. Homohexamer. Forms an RuvA(8)-RuvB(12)-Holliday junction (HJ) complex. HJ DNA is sandwiched between 2 RuvA tetramers; dsDNA enters through RuvA and exits via RuvB. An RuvB hexamer assembles on each DNA strand where it exits the tetramer. Each RuvB hexamer is contacted by two RuvA subunits (via domain III) on 2 adjacent RuvB subunits; this complex drives branch migration. In the full resolvosome a probable DNA-RuvA(4)-RuvB(12)-RuvC(2) complex forms which resolves the HJ.

The protein localises to the cytoplasm. The enzyme catalyses ATP + H2O = ADP + phosphate + H(+). In terms of biological role, the RuvA-RuvB-RuvC complex processes Holliday junction (HJ) DNA during genetic recombination and DNA repair, while the RuvA-RuvB complex plays an important role in the rescue of blocked DNA replication forks via replication fork reversal (RFR). RuvA specifically binds to HJ cruciform DNA, conferring on it an open structure. The RuvB hexamer acts as an ATP-dependent pump, pulling dsDNA into and through the RuvAB complex. RuvB forms 2 homohexamers on either side of HJ DNA bound by 1 or 2 RuvA tetramers; 4 subunits per hexamer contact DNA at a time. Coordinated motions by a converter formed by DNA-disengaged RuvB subunits stimulates ATP hydrolysis and nucleotide exchange. Immobilization of the converter enables RuvB to convert the ATP-contained energy into a lever motion, pulling 2 nucleotides of DNA out of the RuvA tetramer per ATP hydrolyzed, thus driving DNA branch migration. The RuvB motors rotate together with the DNA substrate, which together with the progressing nucleotide cycle form the mechanistic basis for DNA recombination by continuous HJ branch migration. Branch migration allows RuvC to scan DNA until it finds its consensus sequence, where it cleaves and resolves cruciform DNA. The chain is Holliday junction branch migration complex subunit RuvB from Thermotoga petrophila (strain ATCC BAA-488 / DSM 13995 / JCM 10881 / RKU-1).